The sequence spans 343 residues: Aspartate beta-hydroxylase domain-containing protein 2 (343 aa).

At 1 to 31 the chain is on the cytoplasmic side; sequence MWLEWLVAWSWSLDGLRDCIATGIQSVRDCD. Residues 32 to 52 traverse the membrane as a helical segment; the sequence is GTAVITVACLLILFVWYCYHV. The Lumenal portion of the chain corresponds to 53 to 343; it reads GREQPRPHVS…ALDFIFAPGR (291 aa). Asn77 and Asn185 each carry an N-linked (GlcNAc...) asparagine glycan. Trp202 and Ser246 together coordinate 2-oxoglutarate. His257 serves as a coordination point for Fe cation. 266–268 serves as a coordination point for 2-oxoglutarate; it reads RCH. His302 lines the Fe cation pocket. Residue Arg315 participates in 2-oxoglutarate binding.

It belongs to the aspartyl/asparaginyl beta-hydroxylase family. Fe cation is required as a cofactor.

Its subcellular location is the membrane. May function as 2-oxoglutarate-dependent dioxygenase. This is Aspartate beta-hydroxylase domain-containing protein 2 (Asphd2) from Mus musculus (Mouse).